Reading from the N-terminus, the 146-residue chain is MRNEMHLQFSARSENESFARVTVAAFVAQLDPTTDELTEIKTVVSEAVTNAIIHGYNNDPNGIVSISVIIEDGVVHLTVRDEGVGIPDIEEARQPLFTTKPELERSGMGFTIMENFMDEVIVESEVNKGTTVYLKKAYCEKQTLCN.

It belongs to the anti-sigma-factor family.

The catalysed reaction is L-seryl-[protein] + ATP = O-phospho-L-seryl-[protein] + ADP + H(+). It carries out the reaction L-threonyl-[protein] + ATP = O-phospho-L-threonyl-[protein] + ADP + H(+). Binds to sigma F and blocks its ability to form an RNA polymerase holoenzyme (E-sigma F). Phosphorylates SpoIIAA on a serine residue. This phosphorylation may enable SpoIIAA to act as an anti-anti-sigma factor that counteracts SpoIIAB and thus releases sigma F from inhibition. This Geobacillus stearothermophilus (Bacillus stearothermophilus) protein is Anti-sigma F factor.